Consider the following 397-residue polypeptide: tRNA-specific 2-thiouridylase MnmA (397 aa).

ATP-binding positions include alanine 19–serine 26 and leucine 45. Catalysis depends on cysteine 113, which acts as the Nucleophile. Cysteines 113 and 210 form a disulfide. ATP is bound at residue glycine 137. The segment at arginine 160 to glutamine 162 is interaction with tRNA. Cysteine 210 (cysteine persulfide intermediate) is an active-site residue.

The protein belongs to the MnmA/TRMU family.

It localises to the cytoplasm. The enzyme catalyses S-sulfanyl-L-cysteinyl-[protein] + uridine(34) in tRNA + AH2 + ATP = 2-thiouridine(34) in tRNA + L-cysteinyl-[protein] + A + AMP + diphosphate + H(+). Its function is as follows. Catalyzes the 2-thiolation of uridine at the wobble position (U34) of tRNA, leading to the formation of s(2)U34. The polypeptide is tRNA-specific 2-thiouridylase MnmA (Rhodopseudomonas palustris (strain ATCC BAA-98 / CGA009)).